The sequence spans 98 residues: uncharacterized protein (98 aa).

The protein belongs to the HesB/IscA family.

This is an uncharacterized protein from Staphylococcus aureus (strain MRSA252).